The sequence spans 530 residues: White collar 2 protein (530 aa).

A run of 7 repeats spans residues 9–12, 21–24, 25–28, 29–32, 33–36, 37–40, and 41–44. A 7 X 4 AA repeats of G-[SAT]-G-M region spans residues 9-44; that stretch reads GSSMYGFGAMGMGSGMGSGMGSGMGTGMGTGMGTGM. Residues 134 to 158 form a disordered region; that stretch reads IATPTTTTSGPSGGPSSGGGSTLTE. The span at 144–154 shows a compositional bias: gly residues; it reads PSGGPSSGGGS. In terms of domain architecture, PAS spans 162 to 232; it reads RRNWPAKVVE…AELNEAIATG (71 aa). A disordered region spans residues 315–343; sequence REEQEEQEESHRTWRMSQEGRSDVTPSDD. The GATA-type zinc-finger motif lies at 468-493; sequence CTDCGTLDSPEWRKGPSGPKTLCNAC. Residues 504 to 530 form a disordered region; the sequence is KNANNNNNGGGIGGHNDIHTPMGDHMG.

As to quaternary structure, heterodimer of wc-1 and wc-2 (Potential). Binds to DNA.

Its subcellular location is the nucleus. In terms of biological role, may function as a transcription factor involved in light regulation. Binds and affects blue light regulation of the al-3 gene. Wc-1 and wc-2 interact via homologous PAS domains, bind to promoters of light regulated genes such as frq, and activate transcription. May bind directly to frq. The chain is White collar 2 protein (wc-2) from Neurospora crassa (strain ATCC 24698 / 74-OR23-1A / CBS 708.71 / DSM 1257 / FGSC 987).